A 405-amino-acid polypeptide reads, in one-letter code: Adenylosuccinate synthetase (405 aa).

Residues Gly12–Lys18 and Gly40–Thr42 contribute to the GTP site. Asp13 acts as the Proton acceptor in catalysis. Positions 13 and 40 each coordinate Mg(2+). IMP contacts are provided by residues Asp13–Lys16, Asn38–His41, Thr121, Arg135, Gln213, Thr228, and Arg297. His41 (proton donor) is an active-site residue. Thr293–Arg299 is a binding site for substrate. Residues Arg299, Lys325–Asp327, and Ser390–Gly392 each bind GTP.

Belongs to the adenylosuccinate synthetase family. In terms of assembly, homodimer. The cofactor is Mg(2+).

Its subcellular location is the cytoplasm. It catalyses the reaction IMP + L-aspartate + GTP = N(6)-(1,2-dicarboxyethyl)-AMP + GDP + phosphate + 2 H(+). It participates in purine metabolism; AMP biosynthesis via de novo pathway; AMP from IMP: step 1/2. Its function is as follows. Plays an important role in the de novo pathway of purine nucleotide biosynthesis. Catalyzes the first committed step in the biosynthesis of AMP from IMP. This is Adenylosuccinate synthetase from Deinococcus deserti (strain DSM 17065 / CIP 109153 / LMG 22923 / VCD115).